Consider the following 291-residue polypeptide: Ecto-ADP-ribosyltransferase 5 (291 aa).

A signal peptide spans Met1–Ala22. Cys42 and Cys258 are disulfide-bonded. A TR mART core domain is found at Ala62 to Thr252. Tyr99 is a binding site for NAD(+). An N-linked (GlcNAc...) asparagine glycan is attached at Asn101. Positions 160 and 180 each coordinate NAD(+). Residue Arg160 is part of the active site. Ser183 is an active-site residue. Residue Asn196 is glycosylated (N-linked (GlcNAc...) asparagine). Ser214 contacts NAD(+). The active site involves Glu221. An N-linked (GlcNAc...) asparagine glycan is attached at Asn250.

The protein belongs to the Arg-specific ADP-ribosyltransferase family.

The protein localises to the secreted. The enzyme catalyses L-arginyl-[protein] + NAD(+) = N(omega)-(ADP-D-ribosyl)-L-arginyl-[protein] + nicotinamide + H(+). The protein is Ecto-ADP-ribosyltransferase 5 (ART5) of Homo sapiens (Human).